The following is a 197-amino-acid chain: Thymidylate kinase (197 aa).

Residue 7-14 (GIDGSGKS) participates in ATP binding.

Belongs to the thymidylate kinase family.

The catalysed reaction is dTMP + ATP = dTDP + ADP. Functionally, phosphorylation of dTMP to form dTDP in both de novo and salvage pathways of dTTP synthesis. The sequence is that of Thymidylate kinase from Thermotoga sp. (strain RQ2).